We begin with the raw amino-acid sequence, 60 residues long: Small ribosomal subunit protein bS21 (60 aa).

The interval 35–60 (REHYEKPSVKRKKKSEAARRRKSKVR) is disordered. Residues 43 to 60 (VKRKKKSEAARRRKSKVR) show a composition bias toward basic residues.

This sequence belongs to the bacterial ribosomal protein bS21 family.

This Clostridium novyi (strain NT) protein is Small ribosomal subunit protein bS21.